Here is a 208-residue protein sequence, read N- to C-terminus: ATP-dependent Clp protease proteolytic subunit (208 aa).

Serine 111 acts as the Nucleophile in catalysis. Histidine 136 is a catalytic residue.

This sequence belongs to the peptidase S14 family. Fourteen ClpP subunits assemble into 2 heptameric rings which stack back to back to give a disk-like structure with a central cavity, resembling the structure of eukaryotic proteasomes.

It localises to the cytoplasm. It catalyses the reaction Hydrolysis of proteins to small peptides in the presence of ATP and magnesium. alpha-casein is the usual test substrate. In the absence of ATP, only oligopeptides shorter than five residues are hydrolyzed (such as succinyl-Leu-Tyr-|-NHMec, and Leu-Tyr-Leu-|-Tyr-Trp, in which cleavage of the -Tyr-|-Leu- and -Tyr-|-Trp bonds also occurs).. Cleaves peptides in various proteins in a process that requires ATP hydrolysis. Has a chymotrypsin-like activity. Plays a major role in the degradation of misfolded proteins. The sequence is that of ATP-dependent Clp protease proteolytic subunit from Vibrio campbellii (strain ATCC BAA-1116).